Here is a 294-residue protein sequence, read N- to C-terminus: N-acetylmuramic acid 6-phosphate etherase (294 aa).

The region spanning 54–217 (VIASFRKGGR…STTSMIGVGK (164 aa)) is the SIS domain. Glu-82 (proton donor) is an active-site residue. Residue Glu-113 is part of the active site.

The protein belongs to the GCKR-like family. MurNAc-6-P etherase subfamily. In terms of assembly, homodimer.

The catalysed reaction is N-acetyl-D-muramate 6-phosphate + H2O = N-acetyl-D-glucosamine 6-phosphate + (R)-lactate. It participates in amino-sugar metabolism; N-acetylmuramate degradation. In terms of biological role, specifically catalyzes the cleavage of the D-lactyl ether substituent of MurNAc 6-phosphate, producing GlcNAc 6-phosphate and D-lactate. This is N-acetylmuramic acid 6-phosphate etherase from Exiguobacterium sp. (strain ATCC BAA-1283 / AT1b).